A 186-amino-acid chain; its full sequence is MSEPASISSGIAARYAAAVFELAKDEGALPALEKDMDALGAAWSESADLRDLATSPVYAREEQQKAIAAVAAKMGLSTVTANTLALMGSKRRLFVLPQMVADVQNRIATEKGEITAEVTAAAPLSPEQAARLAATLKARAGKDVKLKTTVDESLIGGLVVKLGSSMIDTSVKARLAALQNAMKEVG.

Belongs to the ATPase delta chain family. F-type ATPases have 2 components, F(1) - the catalytic core - and F(0) - the membrane proton channel. F(1) has five subunits: alpha(3), beta(3), gamma(1), delta(1), epsilon(1). CF(0) has four main subunits: a(1), b(1), b'(1) and c(10-14). The alpha and beta chains form an alternating ring which encloses part of the gamma chain. F(1) is attached to F(0) by a central stalk formed by the gamma and epsilon chains, while a peripheral stalk is formed by the delta, b and b' chains.

The protein localises to the cell inner membrane. Its function is as follows. F(1)F(0) ATP synthase produces ATP from ADP in the presence of a proton or sodium gradient. F-type ATPases consist of two structural domains, F(1) containing the extramembraneous catalytic core and F(0) containing the membrane proton channel, linked together by a central stalk and a peripheral stalk. During catalysis, ATP synthesis in the catalytic domain of F(1) is coupled via a rotary mechanism of the central stalk subunits to proton translocation. In terms of biological role, this protein is part of the stalk that links CF(0) to CF(1). It either transmits conformational changes from CF(0) to CF(1) or is implicated in proton conduction. This Cereibacter sphaeroides (strain ATCC 17029 / ATH 2.4.9) (Rhodobacter sphaeroides) protein is ATP synthase subunit delta.